The chain runs to 872 residues: Cellulose synthase catalytic subunit [UDP-forming] (872 aa).

The next 4 helical transmembrane spans lie at 30–50, 151–171, 173–193, and 230–250; these read SAFSATLGCFWMILAWIFIPL, ILGIIVTFSLILALICVTQPF, PLAQFIFLMLLWGGALIVRRM, and LVCGLILLFAETYAWIVLVLG. The tract at residues 271 to 364 is catalytic subdomain A; that stretch reads LWPSVDIFVP…FVSIFDCDHV (94 aa). Residue aspartate 313 is part of the active site. Substrate-binding residues include aspartate 360 and aspartate 362. Residues 441 to 501 are catalytic subdomain B; the sequence is KPLDEIGGIA…GQRIRWARGM (61 aa). Aspartate 457 is an active-site residue. 5 helical membrane passes run 525 to 545, 547 to 567, 592 to 612, 640 to 660, and 668 to 688; these read VNAMFHFLSGIPRLIFLTAPL, FLLLHAYIIYAPALMIALFVL, IYETVLAWYIAPPTLVALINP, IFLVLLNLVGVAVGIWRYFYG, and VVVSMVWVFYNLIVLGGAVAV. The region spanning 694-790 is the PilZ domain; that stretch reads QVRRSHRVEM…QHIDFVQCTF (97 aa). A helical transmembrane segment spans residues 833–853; that stretch reads SVKGIFRVLTSLVSWVVSFIP.

This sequence belongs to the glycosyltransferase 2 family. Mg(2+) is required as a cofactor.

It is found in the cell inner membrane. It carries out the reaction [(1-&gt;4)-beta-D-glucosyl](n) + UDP-alpha-D-glucose = [(1-&gt;4)-beta-D-glucosyl](n+1) + UDP + H(+). It functions in the pathway glycan metabolism; bacterial cellulose biosynthesis. Activated by bis-(3'-5') cyclic diguanylic acid (c-di-GMP). In terms of biological role, catalytic subunit of cellulose synthase. It polymerizes uridine 5'-diphosphate glucose to cellulose, which is produced as an extracellular component for mechanical and chemical protection at the onset of the stationary phase, when the cells exhibit multicellular behavior (rdar morphotype). Coexpression of cellulose and thin aggregative fimbriae leads to a hydrophobic network with tightly packed cells embedded in a highly inert matrix. In Escherichia coli O157:H7, this protein is Cellulose synthase catalytic subunit [UDP-forming] (bcsA).